Here is a 336-residue protein sequence, read N- to C-terminus: NADH-quinone oxidoreductase subunit H (336 aa).

Helical transmembrane passes span 4-24 (YILW…LVVA), 75-95 (YLFF…WAVI), 108-128 (LGLL…VIAG), 154-174 (MGFA…TGII), 181-201 (LWHW…IAGI), 233-253 (LFFL…SIMF), 272-292 (FVPG…MFLW), and 308-328 (LGWK…ACMV).

It belongs to the complex I subunit 1 family. NDH-1 is composed of 14 different subunits. Subunits NuoA, H, J, K, L, M, N constitute the membrane sector of the complex.

The protein localises to the cell inner membrane. It carries out the reaction a quinone + NADH + 5 H(+)(in) = a quinol + NAD(+) + 4 H(+)(out). Functionally, NDH-1 shuttles electrons from NADH, via FMN and iron-sulfur (Fe-S) centers, to quinones in the respiratory chain. The immediate electron acceptor for the enzyme in this species is believed to be ubiquinone. Couples the redox reaction to proton translocation (for every two electrons transferred, four hydrogen ions are translocated across the cytoplasmic membrane), and thus conserves the redox energy in a proton gradient. This subunit may bind ubiquinone. The chain is NADH-quinone oxidoreductase subunit H from Francisella philomiragia subsp. philomiragia (strain ATCC 25017 / CCUG 19701 / FSC 153 / O#319-036).